A 153-amino-acid polypeptide reads, in one-letter code: Large ribosomal subunit protein uL29 (153 aa).

Residues 1 to 83 form a large ribosomal subunit protein uL29 region; the sequence is MNKELRAKTN…KEQTKQKEIQ (83 aa). Positions 84–153 are unknown; that stretch reads ESVKKIKQLR…NVKAKTKKKG (70 aa). The span at 100-121 shows a compositional bias: basic and acidic residues; that stretch reads NKEKRLANAEKVKAAPKPEQKT. A disordered region spans residues 100-153; that stretch reads NKEKRLANAEKVKAAPKPEQKTKKVKKAPKKTETVKPTTNKNKKNVKAKTKKKG. Residues 140 to 153 are compositionally biased toward basic residues; it reads KNKKNVKAKTKKKG.

Belongs to the universal ribosomal protein uL29 family.

The chain is Large ribosomal subunit protein uL29 from Mycoplasmoides gallisepticum (strain R(low / passage 15 / clone 2)) (Mycoplasma gallisepticum).